Here is a 664-residue protein sequence, read N- to C-terminus: DNA ligase (664 aa).

NAD(+) contacts are provided by residues D32–D36 and S80–L81. The active-site N6-AMP-lysine intermediate is the K122. NAD(+)-binding residues include R144, E178, and K314. Zn(2+) contacts are provided by C407, C410, C423, and C429. The BRCT domain occupies I587–K664.

Belongs to the NAD-dependent DNA ligase family. LigA subfamily. The cofactor is Mg(2+). Mn(2+) serves as cofactor.

The enzyme catalyses NAD(+) + (deoxyribonucleotide)n-3'-hydroxyl + 5'-phospho-(deoxyribonucleotide)m = (deoxyribonucleotide)n+m + AMP + beta-nicotinamide D-nucleotide.. Its function is as follows. DNA ligase that catalyzes the formation of phosphodiester linkages between 5'-phosphoryl and 3'-hydroxyl groups in double-stranded DNA using NAD as a coenzyme and as the energy source for the reaction. It is essential for DNA replication and repair of damaged DNA. The sequence is that of DNA ligase from Clostridium botulinum (strain Okra / Type B1).